Consider the following 257-residue polypeptide: AT-hook motif nuclear-localized protein 16 (257 aa).

Residues 1–71 (MAGGTALTPT…SKNKPKPPII (71 aa)) form a disordered region. The a.T hook DNA-binding region spans 53–65 (KRPRGRPAGSKNK). The PPC domain maps to 77 to 214 (PNSLRANAVE…DEAASMQNQQ (138 aa)).

As to quaternary structure, interacts with FVE/MSI4 and MSI5 which are components of HDAC corepressor complexes. In terms of tissue distribution, preferentially expressed in the inflorescence meristem and young floral buds, as well as in seedling-stage vegetative meristems. Widely expressed in flowers, roots and stems, with relatively low expression in leaves.

The protein localises to the nucleus. Its function is as follows. Transcription factor that specifically binds AT-rich DNA sequences related to the nuclear matrix attachment regions (MARs). Encodes a nuclear matrix protein that acts in the maintenance of genomic integrity by silencing TEs and repeat-containing genes through epigenetic machinery. Acts as a chromatin remodeling factor that modifies the architecture of FLC and FWA chromatin by modulating both H3 acetylation and methylation leading to the regulation of FLC and FWA expression. Negatively regulates floral repressors including MAF4 and MAF5. Plays a transcription activation role in anther development. Regulates the expression of arabinogalactan proteins (AGPs) involved in the formation of the nexine layer of the pollen wall. Binds AGP6, AGP11, AGP23 and AGP40 promoters. The polypeptide is AT-hook motif nuclear-localized protein 16 (Arabidopsis thaliana (Mouse-ear cress)).